The chain runs to 154 residues: SsrA-binding protein (154 aa).

This sequence belongs to the SmpB family.

It is found in the cytoplasm. Functionally, required for rescue of stalled ribosomes mediated by trans-translation. Binds to transfer-messenger RNA (tmRNA), required for stable association of tmRNA with ribosomes. tmRNA and SmpB together mimic tRNA shape, replacing the anticodon stem-loop with SmpB. tmRNA is encoded by the ssrA gene; the 2 termini fold to resemble tRNA(Ala) and it encodes a 'tag peptide', a short internal open reading frame. During trans-translation Ala-aminoacylated tmRNA acts like a tRNA, entering the A-site of stalled ribosomes, displacing the stalled mRNA. The ribosome then switches to translate the ORF on the tmRNA; the nascent peptide is terminated with the 'tag peptide' encoded by the tmRNA and targeted for degradation. The ribosome is freed to recommence translation, which seems to be the essential function of trans-translation. In Treponema pallidum (strain Nichols), this protein is SsrA-binding protein.